We begin with the raw amino-acid sequence, 120 residues long: Large ribosomal subunit protein uL18 (120 aa).

Residues 1–22 (MKVDRKTATHRRHQRIRRKIAG) form a disordered region. A compositionally biased stretch (basic residues) spans 8–20 (ATHRRHQRIRRKI).

The protein belongs to the universal ribosomal protein uL18 family. Part of the 50S ribosomal subunit; part of the 5S rRNA/L5/L18/L25 subcomplex. Contacts the 5S and 23S rRNAs.

Functionally, this is one of the proteins that bind and probably mediate the attachment of the 5S RNA into the large ribosomal subunit, where it forms part of the central protuberance. This is Large ribosomal subunit protein uL18 from Gloeobacter violaceus (strain ATCC 29082 / PCC 7421).